The primary structure comprises 188 residues: F7-2 fimbrial protein (188 aa).

An N-terminal signal peptide occupies residues 1–21 (MIKSVIAGAVAMAVVSFGAYA). Cys43 and Cys82 are oxidised to a cystine.

It belongs to the fimbrial protein family.

The protein localises to the fimbrium. Its function is as follows. Fimbriae (also called pili), polar filaments radiating from the surface of the bacterium to a length of 0.5-1.5 micrometers and numbering 100-300 per cell, enable bacteria to colonize the epithelium of specific host organs. In Escherichia coli O6:H1 (strain CFT073 / ATCC 700928 / UPEC), this protein is F7-2 fimbrial protein (F7-2).